The primary structure comprises 127 residues: DNA-directed RNA polymerase subunit omega (127 aa).

It belongs to the RNA polymerase subunit omega family. The RNAP catalytic core consists of 2 alpha, 1 beta, 1 beta' and 1 omega subunit. When a sigma factor is associated with the core the holoenzyme is formed, which can initiate transcription.

The enzyme catalyses RNA(n) + a ribonucleoside 5'-triphosphate = RNA(n+1) + diphosphate. Promotes RNA polymerase assembly. Latches the N- and C-terminal regions of the beta' subunit thereby facilitating its interaction with the beta and alpha subunits. In Rickettsia prowazekii (strain Madrid E), this protein is DNA-directed RNA polymerase subunit omega (rpoZ).